We begin with the raw amino-acid sequence, 253 residues long: Tryptophan synthase alpha chain (253 aa).

Residues E45 and D56 each act as proton acceptor in the active site.

It belongs to the TrpA family. Tetramer of two alpha and two beta chains.

The catalysed reaction is (1S,2R)-1-C-(indol-3-yl)glycerol 3-phosphate + L-serine = D-glyceraldehyde 3-phosphate + L-tryptophan + H2O. The protein operates within amino-acid biosynthesis; L-tryptophan biosynthesis; L-tryptophan from chorismate: step 5/5. Its function is as follows. The alpha subunit is responsible for the aldol cleavage of indoleglycerol phosphate to indole and glyceraldehyde 3-phosphate. The polypeptide is Tryptophan synthase alpha chain (Flavobacterium psychrophilum (strain ATCC 49511 / DSM 21280 / CIP 103535 / JIP02/86)).